The following is a 191-amino-acid chain: Orotate phosphoribosyltransferase (191 aa).

114-122 (EDVVTTGKS) contributes to the 5-phospho-alpha-D-ribose 1-diphosphate binding site. T118 and R146 together coordinate orotate.

It belongs to the purine/pyrimidine phosphoribosyltransferase family. PyrE subfamily. Homodimer. Requires Mg(2+) as cofactor.

It carries out the reaction orotidine 5'-phosphate + diphosphate = orotate + 5-phospho-alpha-D-ribose 1-diphosphate. It participates in pyrimidine metabolism; UMP biosynthesis via de novo pathway; UMP from orotate: step 1/2. Functionally, catalyzes the transfer of a ribosyl phosphate group from 5-phosphoribose 1-diphosphate to orotate, leading to the formation of orotidine monophosphate (OMP). The polypeptide is Orotate phosphoribosyltransferase (Clostridium botulinum (strain ATCC 19397 / Type A)).